Here is a 253-residue protein sequence, read N- to C-terminus: uncharacterized protein (253 aa).

The first 25 residues, 1-25, serve as a signal peptide directing secretion; that stretch reads MRKKKFLSKVSFGSLFLLCGTVLSA. A lipid anchor (N-palmitoyl cysteine) is attached at cysteine 26. The S-diacylglycerol cysteine moiety is linked to residue cysteine 26.

It belongs to the MG439/MG440 family.

The protein localises to the cell membrane. This is an uncharacterized protein from Mycoplasma pneumoniae (strain ATCC 29342 / M129 / Subtype 1) (Mycoplasmoides pneumoniae).